We begin with the raw amino-acid sequence, 647 residues long: Versicolorin B synthase (647 aa).

An N-terminal signal peptide occupies residues 1–26 (MALSTILTAAAMPVAGLFAFAQQSSA). Residues 85-86 (TA) and 106-107 (EA) contribute to the FAD site. Asparagine 117 is a glycosylation site (N-linked (GlcNAc...) asparagine). 172–175 (GAML) serves as a coordination point for FAD. N-linked (GlcNAc...) asparagine glycans are attached at residues asparagine 222 and asparagine 509. FAD is bound by residues alanine 617 and 628 to 629 (PM).

This sequence belongs to the GMC oxidoreductase family. Homodimer. The cofactor is FAD.

It localises to the cytoplasm. Its subcellular location is the cytosol. The enzyme catalyses (2S-3S)-versiconal hemiacetal = versicolorin B + H2O. The catalysed reaction is (S)-5'-oxoaverantin + H(+) = (1'S,5'S)-averufin + H2O. The protein operates within mycotoxin biosynthesis. Functionally, versicolorin B synthase; part of the fragmented gene cluster that mediates the biosynthesis of dothistromin (DOTH), a polyketide toxin very similar in structure to the aflatoxin precursor, versicolorin B. The first step of the pathway is the conversion of acetate to norsolorinic acid (NOR) and requires the fatty acid synthase subunits hexA and hexB, as well as the polyketide synthase pksA. PksA combines a hexanoyl starter unit and 7 malonyl-CoA extender units to synthesize the precursor NOR. The hexanoyl starter unit is provided to the acyl-carrier protein (ACP) domain by the fungal fatty acid synthase hexA/hexB. The second step is the conversion of NOR to averantin (AVN) and requires the norsolorinic acid ketoreductase nor1, which catalyzes the dehydration of norsolorinic acid to form (1'S)-averantin. The cytochrome P450 monooxygenase avnA then catalyzes the hydroxylation of AVN to 5'hydroxyaverantin (HAVN). The next step is performed by adhA that transforms HAVN to averufin (AVF). Averufin might then be converted to hydroxyversicolorone by cypX and avfA. Hydroxyversicolorone is further converted versiconal hemiacetal acetate (VHA) by moxY. VHA is then the substrate for the versiconal hemiacetal acetate esterase est1 to yield versiconal (VAL). Versicolorin B synthase vbsA then converts VAL to versicolorin B (VERB) by closing the bisfuran ring. Then, the activity of the versicolorin B desaturase verB leads to versicolorin A (VERA). DotB, a predicted chloroperoxidase, may perform epoxidation of the A-ring of VERA. Alternatively, a cytochrome P450, such as cypX or avnA could catalyze this step. It is also possible that another, uncharacterized, cytochrome P450 enzyme is responsible for this step. Opening of the epoxide could potentially be achieved by the epoxide hydrolase epoA. However, epoA seems not to be required for DOTH biosynthesis, but other epoxide hydrolases may have the ability to complement this hydrolysis. Alternatively, opening of the epoxide ring could be achieved non-enzymatically. The next step is the deoxygenation of ring A to yield the 5,8-dihydroxyanthraquinone which is most likely catalyzed by the NADPH dehydrogenase encoded by ver1. The last stages of DOTH biosynthesis are proposed to involve hydroxylation of the bisfuran. OrdB and norB might have oxidative roles here. An alternative possibility is that cytochrome P450 monoogenases such as avnA and cypX might perform these steps in addition to previously proposed steps. This Dothistroma septosporum (Red band needle blight fungus) protein is Versicolorin B synthase.